The following is a 245-amino-acid chain: Probable octanoyltransferase 2 (245 aa).

Residues 38–227 form the BPL/LPL catalytic domain; that stretch reads MEYKPVLYFQ…SIEKEFDIKE (190 aa). Residues 89–96, 157–159, and 170–172 each bind substrate; these read RGGYETYH, SIG, and GMA. The Acyl-thioester intermediate role is filled by cysteine 188.

The protein belongs to the LipB family.

Its subcellular location is the cytoplasm. It carries out the reaction octanoyl-[ACP] + L-lysyl-[protein] = N(6)-octanoyl-L-lysyl-[protein] + holo-[ACP] + H(+). It functions in the pathway protein modification; protein lipoylation via endogenous pathway; protein N(6)-(lipoyl)lysine from octanoyl-[acyl-carrier-protein]: step 1/2. Its function is as follows. Catalyzes the transfer of endogenously produced octanoic acid from octanoyl-acyl-carrier-protein onto the lipoyl domains of lipoate-dependent enzymes. Lipoyl-ACP can also act as a substrate although octanoyl-ACP is likely to be the physiological substrate. This is Probable octanoyltransferase 2 from Picrophilus torridus (strain ATCC 700027 / DSM 9790 / JCM 10055 / NBRC 100828 / KAW 2/3).